The sequence spans 301 residues: MKIALLSRSRKLYSSRRLIEAAEERGHEIQVIDVLRAYMNITSHKPSIHYKGEELEGFDVVIPRIGASVTFYGASVLRQFEMMGVYPLNESVAITRSRDKLRSLQLLSRKGIGMPVTGYASKPDDIKDVIKMVGGAPLVVKLLEGTQGIGVVLAETQKAAESVIEGFMGVKANILVQEYIKEANGADIRCFVIGGKVVASMKRQAPNGEFRSNLHRGGSAEVIRITPEERSTAVSAAKIMGLNVAGVDLLRSNHGPVVMEVNSSPGLRGIETATGKDIAGMIIEYIEKSGKVGKTKTRGKG.

An ATP-grasp domain is found at 104-287 (LQLLSRKGIG…IAGMIIEYIE (184 aa)). ATP is bound by residues lysine 141, 178–179 (EY), aspartate 187, and 211–213 (RSN). Mg(2+) contacts are provided by aspartate 248, glutamate 260, and asparagine 262. Mn(2+) is bound by residues aspartate 248, glutamate 260, and asparagine 262.

It belongs to the RimK family. It depends on Mg(2+) as a cofactor. Mn(2+) serves as cofactor.

The chain is Probable alpha-L-glutamate ligase from Methanococcoides burtonii (strain DSM 6242 / NBRC 107633 / OCM 468 / ACE-M).